The chain runs to 509 residues: Protein WHAT'S THIS FACTOR 1 homolog, chloroplastic (509 aa).

A chloroplast-targeting transit peptide spans 1 to 56 (MDAKLLLLPFPSPPATLHHHPPPPKSLFLGASLPLLHPPPPLRLLRPGAPRRLAVV). The PORR domain occupies 65 to 393 (KEIPFDNVIQ…LKEKMRALVA (329 aa)). 2 disordered regions span residues 402 to 431 (VPATSEEADRTNGAAQMLSEGSDVEDDEDE) and 444 to 509 (SGGK…RERW). Residues 461–474 (ENDDSPPDFEDDDG) show a composition bias toward acidic residues.

Its subcellular location is the plastid. It localises to the chloroplast. Its function is as follows. RNA-binding protein involved in group II intron splicing. Binds specific group II introns and promotes their splicing. Functions in the context of a heterodimer with the ribonuclease III domain-containing protein RNC1. This is Protein WHAT'S THIS FACTOR 1 homolog, chloroplastic from Oryza sativa subsp. japonica (Rice).